The following is a 239-amino-acid chain: Pyridoxine 5'-phosphate synthase (239 aa).

Residue asparagine 7 participates in 3-amino-2-oxopropyl phosphate binding. 9–10 serves as a coordination point for 1-deoxy-D-xylulose 5-phosphate; the sequence is DH. Residue arginine 18 coordinates 3-amino-2-oxopropyl phosphate. Histidine 43 (proton acceptor) is an active-site residue. The 1-deoxy-D-xylulose 5-phosphate site is built by arginine 45 and histidine 50. The active-site Proton acceptor is the glutamate 70. Threonine 100 contacts 1-deoxy-D-xylulose 5-phosphate. Histidine 191 functions as the Proton donor in the catalytic mechanism. Residues glycine 192 and 213–214 contribute to the 3-amino-2-oxopropyl phosphate site; that span reads GH.

The protein belongs to the PNP synthase family. In terms of assembly, homooctamer; tetramer of dimers.

Its subcellular location is the cytoplasm. It catalyses the reaction 3-amino-2-oxopropyl phosphate + 1-deoxy-D-xylulose 5-phosphate = pyridoxine 5'-phosphate + phosphate + 2 H2O + H(+). The protein operates within cofactor biosynthesis; pyridoxine 5'-phosphate biosynthesis; pyridoxine 5'-phosphate from D-erythrose 4-phosphate: step 5/5. Functionally, catalyzes the complicated ring closure reaction between the two acyclic compounds 1-deoxy-D-xylulose-5-phosphate (DXP) and 3-amino-2-oxopropyl phosphate (1-amino-acetone-3-phosphate or AAP) to form pyridoxine 5'-phosphate (PNP) and inorganic phosphate. The protein is Pyridoxine 5'-phosphate synthase of Trichormus variabilis (strain ATCC 29413 / PCC 7937) (Anabaena variabilis).